An 87-amino-acid polypeptide reads, in one-letter code: DNA-directed RNA polymerase subunit omega (87 aa).

It belongs to the RNA polymerase subunit omega family. In terms of assembly, the RNAP catalytic core consists of 2 alpha, 1 beta, 1 beta' and 1 omega subunit. When a sigma factor is associated with the core the holoenzyme is formed, which can initiate transcription.

It catalyses the reaction RNA(n) + a ribonucleoside 5'-triphosphate = RNA(n+1) + diphosphate. Its function is as follows. Promotes RNA polymerase assembly. Latches the N- and C-terminal regions of the beta' subunit thereby facilitating its interaction with the beta and alpha subunits. The protein is DNA-directed RNA polymerase subunit omega of Pseudomonas fluorescens (strain ATCC BAA-477 / NRRL B-23932 / Pf-5).